The sequence spans 572 residues: Urease subunit alpha (572 aa).

The Urease domain occupies 134-572; it reads AGIDSHIHLI…AAMNQRYFFG (439 aa). The Ni(2+) site is built by His-139, His-141, and Lys-222. N6-carboxylysine is present on Lys-222. His-224 serves as a coordination point for substrate. His-251 and His-277 together coordinate Ni(2+). The Proton donor role is filled by His-325. Asp-365 lines the Ni(2+) pocket.

This sequence belongs to the metallo-dependent hydrolases superfamily. Urease alpha subunit family. In terms of assembly, heterotrimer of UreA (gamma), UreB (beta) and UreC (alpha) subunits. Three heterotrimers associate to form the active enzyme. Ni cation is required as a cofactor. Carboxylation allows a single lysine to coordinate two nickel ions.

Its subcellular location is the cytoplasm. It carries out the reaction urea + 2 H2O + H(+) = hydrogencarbonate + 2 NH4(+). It functions in the pathway nitrogen metabolism; urea degradation; CO(2) and NH(3) from urea (urease route): step 1/1. The chain is Urease subunit alpha from Yersinia enterocolitica serotype O:8 / biotype 1B (strain NCTC 13174 / 8081).